The primary structure comprises 529 residues: T-complex protein 1 subunit delta (529 aa).

Belongs to the TCP-1 chaperonin family. Heterooligomeric complex of about 850 to 900 kDa that forms two stacked rings, 12 to 16 nm in diameter.

It localises to the cytoplasm. Functionally, molecular chaperone; assists the folding of proteins upon ATP hydrolysis. Known to play a role, in vitro, in the folding of actin and tubulin. In Candida glabrata (strain ATCC 2001 / BCRC 20586 / JCM 3761 / NBRC 0622 / NRRL Y-65 / CBS 138) (Yeast), this protein is T-complex protein 1 subunit delta (CCT4).